Consider the following 574-residue polypeptide: Lysyl oxidase homolog 1 (574 aa).

The N-terminal stretch at 1-25 (MALARGSRQLGALVWGACLCVLVHG) is a signal peptide. A propeptide spanning residues 26–95 (QQAQPGQGSD…RRSHGSPRRR (70 aa)) is cleaved from the precursor. 2 disordered regions span residues 62–123 (VPAG…GFGQ) and 239–374 (GGEE…DLVP). The segment covering 86-96 (RRSHGSPRRRQ) has biased composition (basic residues). Pro residues-rich tracts occupy residues 255–268 (PERP…PPPD) and 313–332 (YANP…PPYL). The interval 311–369 (PPYANPPPEAYGPPRALEPPYLPVRSSDTPPPGGERNGAQQGRLSVGSVYRPNQNGRGL) is interaction with FBLN5. The tract at residues 370–574 (PDLVPDPNYV…SATNCKIVQS (205 aa)) is lysyl-oxidase like. 5 disulfides stabilise this stretch: C395–C401, C448–C497, C481–C487, C508–C518, and C555–C569. Residues H449, H451, and H453 each coordinate Cu cation. Positions 477–512 (KASFCLEDSTCDFGNLKRYACTSHTQGLSPGCYDTY) form a cross-link, lysine tyrosylquinone (Lys-Tyr); alternate. Y512 carries the 2',4',5'-topaquinone; alternate modification.

It belongs to the lysyl oxidase family. As to quaternary structure, interacts (via propeptide) with EFEMP2. Interacts with FBLN5. Cu cation serves as cofactor. Lysine tyrosylquinone residue is required as a cofactor. Post-translationally, the lysine tyrosylquinone cross-link (LTQ) is generated by condensation of the epsilon-amino group of a lysine with a topaquinone produced by oxidation of tyrosine. Proteolytic processing by a furin-like protease causes removal of N-terminal propeptide resulting in an enzyme largely inactive, but further proteolytic processing by BMP1 results in enzyme activation. In terms of tissue distribution, expressed in ocular tissues including the iris, ciliary body, lens and optic nerve. Not detected in the retina.

The protein resides in the secreted. The protein localises to the extracellular space. Its subcellular location is the extracellular matrix. It carries out the reaction L-lysyl-[protein] + O2 + H2O = (S)-2-amino-6-oxohexanoyl-[protein] + H2O2 + NH4(+). In terms of biological role, catalyzes the oxidative deamination of lysine and hydroxylysine residues in collagen and elastin, resulting in the formation of covalent cross-linkages, and the stabilization of collagen and elastin fibers. Essential for the elastic fiber homeostasis and for their maintenance at adult age. The sequence is that of Lysyl oxidase homolog 1 (LOXL1) from Homo sapiens (Human).